The sequence spans 226 residues: MNDTDVQNQIQQMVRFMRQEAEEKANEISVSAEEEFNIEKLQLVEAEKKKIRQEYERKAKQVDVRRKIEYSMQLNASRIKVLQAQDDLVNAMKEAASKELLLVSGDHHQYRNLLKELIVQSLLRLKEPAVLLRCREEDKHHVHRVLHSAREEYGEKACVSHPEVIVDDIHLPPAPTSYDSHELSCSGGVVMASRDGKIVFENTLDARLEVAFRKKLPQIRKQLFAV.

Belongs to the V-ATPase E subunit family. In terms of assembly, V-ATPase is a heteromultimeric enzyme composed of a peripheral catalytic V1 complex (components A to H) attached to an integral membrane V0 proton pore complex (components: a, c, c', c'' and d).

Functionally, subunit of the peripheral V1 complex of vacuolar ATPase essential for assembly or catalytic function. V-ATPase is responsible for acidifying a variety of intracellular compartments in eukaryotic cells. This is V-type proton ATPase subunit E (VATE) from Mesembryanthemum crystallinum (Common ice plant).